The following is a 360-amino-acid chain: Heat-inducible transcription repressor HrcA (360 aa).

It belongs to the HrcA family.

Functionally, negative regulator of class I heat shock genes (grpE-dnaK-dnaJ and groELS operons). Prevents heat-shock induction of these operons. This chain is Heat-inducible transcription repressor HrcA, found in Streptococcus thermophilus (strain CNRZ 1066).